A 256-amino-acid polypeptide reads, in one-letter code: MKDAVVITVGNEVLKGRTVNTNASFIGNFLTYQGYRVKLGLTVMDDLEDISWAFKTAMDRGDVIVSSGGLGPTFDDMTVEGFAKAIGSDNKLNQDALAMIEEKYKNIEITPERKKMAMMPEVCKPIRNPVGTAPGLLCSVGGKKVVILPGVPMEMQALLESMRDSLAIENSCYFDESINITGIMESTFAPYVERVMREVDGVYVKSHPKNIEVVNPSLEIEVSAYDVSQEAARKKVKDAIARIRAYAETILDSKDK.

Belongs to the CinA family.

In Thermoplasma volcanium (strain ATCC 51530 / DSM 4299 / JCM 9571 / NBRC 15438 / GSS1), this protein is Protein TV0584.